A 1744-amino-acid polypeptide reads, in one-letter code: Complement C4-A (1744 aa).

Positions 1 to 19 are cleaved as a signal peptide; that stretch reads MRLLWGLIWASSFFTLSLQ. Cysteine 68 and cysteine 97 are joined by a disulfide. Asparagine 226 carries an N-linked (GlcNAc...) asparagine glycan. Cysteine 635 and cysteine 669 form a disulfide bridge. Positions 676 to 679 are excised as a propeptide; the sequence is RKKR. 3 disulfides stabilise this stretch: cysteine 702/cysteine 728, cysteine 703/cysteine 735, and cysteine 716/cysteine 736. The 35-residue stretch at 702–736 folds into the Anaphylatoxin-like domain; the sequence is CCQDGVTRLPMMRSCEQRAARVQQPDCREPFLSCC. Asparagine 862 carries N-linked (GlcNAc...) asparagine glycosylation. Serine 918 carries the phosphoserine; by FAM20C modification. A cross-link (isoglutamyl cysteine thioester (Cys-Gln)) is located at residues 1010-1013; sequence CGEQ. Threonine 1244 carries O-linked (GalNAc...) threonine glycosylation. A glycan (N-linked (GlcNAc...) (complex) asparagine) is linked at asparagine 1328. The N-linked (GlcNAc...) asparagine glycan is linked to asparagine 1391. A sulfotyrosine mark is found at tyrosine 1417, tyrosine 1420, and tyrosine 1422. Positions 1447 to 1453 are excised as a propeptide; sequence RRNRRRR. 5 cysteine pairs are disulfide-bonded: cysteine 1471-cysteine 1535, cysteine 1583-cysteine 1588, cysteine 1595-cysteine 1673, cysteine 1618-cysteine 1742, and cysteine 1718-cysteine 1727. Positions 1595–1742 constitute an NTR domain; the sequence is CPRQRRALER…FLQEYGTQGC (148 aa).

Complement circulates in blood as a disulfide-linked trimer of an alpha, beta and gamma chain. As to quaternary structure, complement C4b is composed of complement C4b-A, complement C4 beta and complement C4 gamma chains that are associated via disulfide bonds. Non-enzymatic component of the C3 convertase, also named C4bC2b, composed of the serine protease complement C2b (C2), as well as complement C4b. Non-enzymatic component of the C5 convertase, also named C4bC2bC3b, composed of the serine protease complement C2b (C2), complement C3b, as well as complement C4b. In terms of processing, prior to secretion, the single-chain precursor is enzymatically cleaved by plasminogen (PLG) to yield non-identical chains alpha, beta and gamma. During activation of the complement systems, the alpha chain is cleaved into C4a and C4b by different proteases depending on the complement pathway: C4b stays linked to the beta and gamma chains, while C4a is released in the plasma. The alpha chain is cleaved by C1S to generate C4a and C4b following activation by the classical complement system. The alpha chain is cleaved to generate C4a and C4b by MASP2 following activation by the lectin complement system. The alpha chain is cleaved by GZMK to generate C4a and C4b following activation by the GZMK complement system. Further degradation of C4b by C1 into the inactive fragments C4c and C4d blocks the generation of C3 convertase. The proteolytic cleavages often are incomplete so that many structural forms can be found in plasma. Upon activation, the internal thioester bond reacts with carbohydrate antigens on the target surface to form amide or ester bonds, leading to covalent association with the surface of pathogens. Post-translationally, ser-1236 of complement C4b interacts with complement C3b via a thioester linkage. In terms of processing, N- and O-glycosylated. O-glycosylated with a core 1 or possibly core 8 glycan. As to expression, complement component C4 is expressed at highest levels in the liver, at moderate levels in the adrenal cortex, adrenal medulla, thyroid gland, and the kidney, and at lowest levels in the heart, ovary, small intestine, thymus, pancreas and spleen. The extra-hepatic sites of expression may be important for the local protection and inflammatory response.

Its subcellular location is the secreted. It localises to the synapse. The protein resides in the cell projection. It is found in the axon. The protein localises to the dendrite. Its subcellular location is the cell surface. Specifically inhibited by nanobody hC4Nb8, inhibiting the classical complement pathway. Specifically inhibited by NbB5, NbE11 and NbH9 nanobodies, and to a lesser extent by NbH11 and NbE3 nanobodies. Precursor of non-enzymatic components of the classical, lectin and GZMK complement pathways, which consist in a cascade of proteins that leads to phagocytosis and breakdown of pathogens and signaling that strengthens the adaptive immune system. In terms of biological role, non-enzymatic component of C3 and C5 convertases. Generated following cleavage by complement proteases (C1S, MASP2 or GZMK, depending on the complement pathway), it covalently attaches to the surface of pathogens, where it acts as an opsonin that marks the surface of antigens for removal. It then recruits the serine protease complement C2b to form the C3 and C5 convertases, which cleave and activate C3 and C5, respectively, the next components of the complement pathways. Complement C4b-A isotype is responsible for effective binding to form amide bonds with immune aggregates or protein antigens, while complement C4b-B isotype catalyzes the transacylation of the thioester carbonyl group to form ester bonds with carbohydrate antigens. Its function is as follows. Putative humoral mediator released following cleavage by complement proteases (C1S, MASP2 or GZMK, depending on the complement pathway). While it is strongly similar to anaphylatoxins, its role is unclear. Was reported to act as a mediator of local inflammatory process; however these effects were probably due to contamination with C3a and/C5a anaphylatoxins in biological assays. The chain is Complement C4-A from Homo sapiens (Human).